The following is a 135-amino-acid chain: Ribonuclease P protein component (135 aa).

This sequence belongs to the RnpA family. Consists of a catalytic RNA component (M1 or rnpB) and a protein subunit.

It carries out the reaction Endonucleolytic cleavage of RNA, removing 5'-extranucleotides from tRNA precursor.. In terms of biological role, RNaseP catalyzes the removal of the 5'-leader sequence from pre-tRNA to produce the mature 5'-terminus. It can also cleave other RNA substrates such as 4.5S RNA. The protein component plays an auxiliary but essential role in vivo by binding to the 5'-leader sequence and broadening the substrate specificity of the ribozyme. The polypeptide is Ribonuclease P protein component (Pseudomonas paraeruginosa (strain DSM 24068 / PA7) (Pseudomonas aeruginosa (strain PA7))).